The sequence spans 510 residues: Dolichyl-P-Man:Man5GlcNAc2-PP-dolichol alpha-1,3-mannosyltransferase Alg3 (510 aa).

The Cytoplasmic segment spans residues 1-43 (MAPPKAASHRPAVRRKKSGTLVDSILDKYLNVRFFKYLLLEPA). A helical transmembrane segment spans residues 44–64 (ALPIVGLFVLLAELVINVVVI). Topologically, residues 65–97 (QRVPYTEIDWVAYMQECEGFLNGTTNYSLLRGD) are lumenal. The helical transmembrane segment at 98-118 (TGPLVYPAAFVYIYSALYYVT) threads the bilayer. The Cytoplasmic portion of the chain corresponds to 119–125 (SHGTNVR). A helical transmembrane segment spans residues 126–146 (LAQYIFAGIYLLQLALVLRLY). Topologically, residues 147 to 171 (SKSRKVPPYVLVLSAFTSYRIHSIY) are lumenal. The helical transmembrane segment at 172-192 (VLRLFNDPVAVLLLYAALNLF) threads the bilayer. Residues 193–211 (LDRRWTLGSTFFSLAVGVK) are Cytoplasmic-facing. A helical transmembrane segment spans residues 212–232 (MNILLFAPALLLFYLANLGLL). Arg-233 is a topological domain (lumenal). A helical membrane pass occupies residues 234 to 254 (TILQLAVCGVIQLLLGAPFLL). The Cytoplasmic portion of the chain corresponds to 255–294 (THPVEYLRGSFDLGRIFEHKWTVNYRFLSRDVFENRTFHV). A helical membrane pass occupies residues 295-315 (SLLGLHLLLLLAFAKPIWTFF). Topologically, residues 316–403 (QSYVRLRRIE…YGIHFDRCTQ (88 aa)) are lumenal. The tract at residues 337–358 (LQLKAQKRPKKVEKDKDKDQKK) is disordered. Positions 348–358 (VEKDKDKDQKK) are enriched in basic and acidic residues. A helical transmembrane segment spans residues 404–424 (LALLPFFLCNLVGVACSRSLH). At 425–426 (YQ) the chain is on the cytoplasmic side. The helical transmembrane segment at 427–447 (FYVWYFHSLPYLAWSTPYSLG) threads the bilayer. Residues 448-464 (VRCLILGLIEYCWNTYP) are Lumenal-facing. A helical membrane pass occupies residues 465-485 (STNFSSAALHFTHIILLAGVA). Topologically, residues 486–510 (KQLIQTMRINNAAKREQQEQQKKLQ) are cytoplasmic.

Belongs to the glycosyltransferase ALG3 family.

It localises to the endoplasmic reticulum membrane. The catalysed reaction is an alpha-D-Man-(1-&gt;2)-alpha-D-Man-(1-&gt;2)-alpha-D-Man-(1-&gt;3)-[alpha-D-Man-(1-&gt;6)]-beta-D-Man-(1-&gt;4)-beta-D-GlcNAc-(1-&gt;4)-alpha-D-GlcNAc-diphospho-di-trans,poly-cis-dolichol + a di-trans,poly-cis-dolichyl beta-D-mannosyl phosphate = an alpha-D-Man-(1-&gt;2)-alpha-D-Man-(1-&gt;2)-alpha-D-Man-(1-&gt;3)-[alpha-D-Man-(1-&gt;3)-alpha-D-Man-(1-&gt;6)]-beta-D-Man-(1-&gt;4)-beta-D-GlcNAc-(1-&gt;4)-alpha-D-GlcNAc-diphospho-di-trans,poly-cis-dolichol + a di-trans,poly-cis-dolichyl phosphate + H(+). Its pathway is protein modification; protein glycosylation. Its function is as follows. Probable alpha-1,3-mannosyltransferase involved in the N-glycosylation pathway. Involved in glycosylation of the TNF receptor grnd, regulating its ligand affinity. Required for normal epithelial growth and architecture. Suppressor of JNK-dependent intestinal stem cell proliferation. The polypeptide is Dolichyl-P-Man:Man5GlcNAc2-PP-dolichol alpha-1,3-mannosyltransferase Alg3 (Drosophila melanogaster (Fruit fly)).